We begin with the raw amino-acid sequence, 114 residues long: Probable 4-amino-4-deoxy-L-arabinose-phosphoundecaprenol flippase subunit ArnE (114 aa).

3 helical membrane-spanning segments follow: residues 38 to 58, 64 to 84, and 94 to 114; these read LTLRWLAIAVVSLGLGMLLWL, LPLSVAYPMLSFNFVLVTLAA, and LRHWLGVAAIIFGILLMSWHL. The region spanning 43-112 is the EamA domain; it reads LAIAVVSLGL…IIFGILLMSW (70 aa).

The protein belongs to the ArnE family. Heterodimer of ArnE and ArnF.

The protein resides in the cell inner membrane. The protein operates within bacterial outer membrane biogenesis; lipopolysaccharide biosynthesis. In terms of biological role, translocates 4-amino-4-deoxy-L-arabinose-phosphoundecaprenol (alpha-L-Ara4N-phosphoundecaprenol) from the cytoplasmic to the periplasmic side of the inner membrane. The chain is Probable 4-amino-4-deoxy-L-arabinose-phosphoundecaprenol flippase subunit ArnE from Yersinia pseudotuberculosis serotype O:1b (strain IP 31758).